The primary structure comprises 160 residues: Large ribosomal subunit protein eL21B (160 aa).

Residue Lys32 forms a Glycyl lysine isopeptide (Lys-Gly) (interchain with G-Cter in ubiquitin) linkage.

It belongs to the eukaryotic ribosomal protein eL21 family. Component of the large ribosomal subunit (LSU). Mature yeast ribosomes consist of a small (40S) and a large (60S) subunit. The 40S small subunit contains 1 molecule of ribosomal RNA (18S rRNA) and 33 different proteins (encoded by 57 genes). The large 60S subunit contains 3 rRNA molecules (25S, 5.8S and 5S rRNA) and 46 different proteins (encoded by 81 genes).

The protein localises to the cytoplasm. Functionally, component of the ribosome, a large ribonucleoprotein complex responsible for the synthesis of proteins in the cell. The small ribosomal subunit (SSU) binds messenger RNAs (mRNAs) and translates the encoded message by selecting cognate aminoacyl-transfer RNA (tRNA) molecules. The large subunit (LSU) contains the ribosomal catalytic site termed the peptidyl transferase center (PTC), which catalyzes the formation of peptide bonds, thereby polymerizing the amino acids delivered by tRNAs into a polypeptide chain. The nascent polypeptides leave the ribosome through a tunnel in the LSU and interact with protein factors that function in enzymatic processing, targeting, and the membrane insertion of nascent chains at the exit of the ribosomal tunnel. The chain is Large ribosomal subunit protein eL21B from Saccharomyces cerevisiae (strain ATCC 204508 / S288c) (Baker's yeast).